Consider the following 1507-residue polypeptide: ABC multidrug transporter SNQ2 (1507 aa).

Residues 1 to 73 (MSSSSEISVA…RSSTAELSPE (73 aa)) are disordered. A compositionally biased stretch (basic and acidic residues) spans 41–55 (RSHEDADGDDAHSDN). 2 N-linked (GlcNAc...) asparagine glycosylation sites follow: asparagine 55 and asparagine 336. The region spanning 157–412 (CLPYTIYKAI…FYRMGYECPP (256 aa)) is the ABC transporter 1 domain. 3 helical membrane-spanning segments follow: residues 522–542 (AYTV…GSLY), 556–576 (GGVL…NLSF), and 605–625 (FPFR…LSGL). A glycan (N-linked (GlcNAc...) asparagine) is linked at asparagine 626. A helical membrane pass occupies residues 635-655 (VYLFLTMCSESINALFELIAA). Asparagine 659 carries N-linked (GlcNAc...) asparagine glycosylation. 2 helical membrane passes run 665-685 (SISG…IQLP) and 773-793 (FGIM…ITEI). An ABC transporter 2 domain is found at 857–1099 (FIWRNVCYTI…LLSYFERNGA (243 aa)). Residue asparagine 878 is glycosylated (N-linked (GlcNAc...) asparagine). 893–900 (GESGAGKT) lines the ATP pocket. Transmembrane regions (helical) follow at residues 1193–1213 (YIMS…FTFY), 1220–1240 (TGLQ…APAM), and 1270–1290 (LITQ…IFFV). Asparagine 1311 is a glycosylation site (N-linked (GlcNAc...) asparagine). 2 consecutive transmembrane segments (helical) span residues 1314–1334 (IMFQ…APNL) and 1339–1359 (VILG…QPVS). An N-linked (GlcNAc...) asparagine glycan is attached at asparagine 1428. A helical membrane pass occupies residues 1459-1479 (FGLYWAYIGFNICAMVAIYYI).

This sequence belongs to the ABC transporter superfamily. ABCG family. PDR (TC 3.A.1.205) subfamily.

It is found in the cell membrane. Its function is as follows. ABC multidrug transporter involved in the response to azoles such as fluconazole, itraconazole, ketoconazole and voriconazole and contributes to the development of PDR1-dependent azole resistance. Plays a role in biofilm tolerance to fluconazole. Also confers resistance to 4-nitroquinoline-N-oxide (4-NQO). The chain is ABC multidrug transporter SNQ2 from Candida glabrata (strain ATCC 2001 / BCRC 20586 / JCM 3761 / NBRC 0622 / NRRL Y-65 / CBS 138) (Yeast).